The sequence spans 395 residues: uncharacterized protein (395 aa).

Disordered regions lie at residues 1-121 (MLLP…TANS), 136-187 (MRMK…LDRN), 308-335 (QNNE…SKDE), and 365-395 (IQKF…NEGD). Positions 13-28 (PKGEAKSLVARERKSQ) are enriched in basic and acidic residues. Residues 64–73 (KSAKLRRKKS) show a composition bias toward basic residues. The span at 97-111 (SIEKKKEEMTSKLPE) shows a compositional bias: basic and acidic residues. The span at 144 to 164 (TSRMATKSDSSLETMPESSHN) shows a compositional bias: polar residues. The segment covering 170-179 (KSRKSQRTRG) has biased composition (basic residues). Residues 365 to 377 (IQKFRKKYQKQLK) are compositionally biased toward basic residues. The segment covering 378–395 (KSQEEKKDDTKTAKNEGD) has biased composition (basic and acidic residues).

This is an uncharacterized protein from Caenorhabditis elegans.